Reading from the N-terminus, the 453-residue chain is CBL-interacting protein kinase 24 (453 aa).

In terms of domain architecture, Protein kinase spans 18–271; that stretch reads YEVGRTIGQG…IEQIREDTWF (254 aa). ATP is bound by residues 24–32 and Lys47; that span reads IGQGTFAKV. The Proton acceptor role is filled by Asp141. Residues 159–186 are activation loop; sequence DFGLSTLAQKGVGLLHTTCGTPNYVAPE. The region spanning 310-336 is the NAF domain; the sequence is NDGGPLVMNAFEMITLSQGLDLSALFD. Residues 343-372 form a PPI region; sequence KRQTRFVSRKPAKTIVATIEVVAETMGLKV.

This sequence belongs to the protein kinase superfamily. CAMK Ser/Thr protein kinase family. SNF1 subfamily. In terms of assembly, interacts with CBL4. It depends on Mn(2+) as a cofactor.

The catalysed reaction is L-seryl-[protein] + ATP = O-phospho-L-seryl-[protein] + ADP + H(+). It carries out the reaction L-threonyl-[protein] + ATP = O-phospho-L-threonyl-[protein] + ADP + H(+). In terms of biological role, involved in the regulatory pathway for the control of intracellular Na(+) and K(+) homeostasis and salt tolerance. Operates in synergy with CBL4 to activate the plasma membrane Na(+)/H(+) antiporter SOS1. CIPK serine-threonine protein kinases interact with CBL proteins. Binding of a CBL protein to the regulatory NAF domain of CIPK protein lead to the activation of the kinase in a calcium-dependent manner. This is CBL-interacting protein kinase 24 (CIPK24) from Oryza sativa subsp. japonica (Rice).